The following is a 314-amino-acid chain: Three-prime repair exonuclease 1 (314 aa).

Mg(2+)-binding residues include Asp-18 and Glu-20. 20 to 21 serves as a coordination point for substrate; the sequence is EA. A Phosphoserine modification is found at Ser-78. Tyr-129 lines the substrate pocket. The residue at position 167 (Ser-167) is a Phosphoserine. The active-site Proton donor/acceptor is the His-195. Asp-200 provides a ligand contact to Mg(2+). Asp-200 contributes to the substrate binding site. The interval 236-314 is necessary for endoplasmic reticulum localization; sequence TASARTKPRP…YGLSLATPGE (79 aa). A disordered region spans residues 240-278; the sequence is RTKPRPSAVTTTAHLATTRNTSPSLGESRGTKDLPPVKD. The interval 243–314 is interaction with UBQLN1; the sequence is PRPSAVTTTA…YGLSLATPGE (72 aa). The segment covering 247–260 has biased composition (low complexity); it reads AVTTTAHLATTRNT. Ser-261 bears the Phosphoserine mark. Residues 281 to 314 are necessary for cytoplasmic retention; the sequence is ALSREGLLAPLGLLAILTLAVATLYGLSLATPGE.

It belongs to the exonuclease superfamily. TREX family. Homodimer. Interacts (via proline-rich region) with TCERG1/CA150 (via the second WW domain). Component of the SET complex, composed of at least ANP32A, APEX1, HMGB2, NME1, SET and TREX1. Within this complex, directly interacts with SET; this interaction does not result in TREX1 inhibition. Also interacts with NME1, but only following translocation to the nucleus. Directly interacts with UBQLN1 (via ubiquitin-like domain); the interaction may control TREX1 subcellular location. The cofactor is Mg(2+). In terms of processing, ubiquitinated, but not targeted to proteasomal degradation. Ubiquitination may be important for interaction with UBQLN1. In terms of tissue distribution, detected in thymus, spleen, liver, brain, heart, small intestine and colon.

It is found in the nucleus. Its subcellular location is the cytoplasm. The protein localises to the cytosol. The protein resides in the endoplasmic reticulum membrane. The enzyme catalyses Exonucleolytic cleavage in the 3'- to 5'-direction to yield nucleoside 5'-phosphates.. Major cellular 3'-to-5' DNA exonuclease which digests single-stranded DNA (ssDNA) and double-stranded DNA (dsDNA) with mismatched 3' termini. Prevents cell-intrinsic initiation of autoimmunity. Acts by metabolizing DNA fragments from endogenous retroelements, including L1, LTR and SINE elements. Plays a key role in degradation of DNA fragments at cytosolic micronuclei arising from genome instability: its association with the endoplasmic reticulum membrane directs TREX1 to ruptured micronuclei, leading to micronuclear DNA degradation. Micronuclear DNA degradation is required to limit CGAS activation and subsequent inflammation. Unless degraded, these DNA fragments accumulate in the cytosol and activate the cGAS-STING innate immune signaling, leading to the production of type I interferon. Prevents chronic ATM-dependent checkpoint activation, by processing ssDNA polynucleotide species arising from the processing of aberrant DNA replication intermediates. Inefficiently degrades oxidized DNA, such as that generated upon antimicrobial reactive oxygen production or upon absorption of UV light. During GZMA-mediated cell death, contributes to DNA damage in concert with NME1. NME1 nicks one strand of DNA and TREX1 removes bases from the free 3' end to enhance DNA damage and prevent DNA end reannealing and rapid repair. The polypeptide is Three-prime repair exonuclease 1 (Homo sapiens (Human)).